Reading from the N-terminus, the 875-residue chain is Serine/threonine-protein kinase D2 (875 aa).

The tract at residues 1 to 33 (MAAAPSHPAGLPCSPGPGSPPPPGGSDLQSLPP) is disordered. The span at 14–24 (SPGPGSPPPPG) shows a compositional bias: pro residues. Serine 26 and serine 30 each carry phosphoserine. Position 87 is a phosphotyrosine (tyrosine 87). Residues 138–188 (PHALTVHSYRAPAFCDHCGEMLFGLVRQGLKCDGCGLNYHKRCAFSIPNNC) form a Phorbol-ester/DAG-type 1 zinc finger. Serine 197, serine 198, serine 200, serine 203, serine 206, serine 211, serine 212, and serine 214 each carry phosphoserine. The interval 224 to 247 (RSTTDLLPRRPPSSSSSSSSSSFY) is disordered. A compositionally biased stretch (low complexity) spans 236-245 (SSSSSSSSSS). Serine 244 is subject to Phosphoserine; by CSNK1D and CSNK1E. Position 245 is a phosphoserine (serine 245). The segment at 265–315 (PHTFLIHSYTRPTVCQACKKLLKGLFRQGLQCKDCKFNCHKRCATRVPNDC) adopts a Phorbol-ester/DAG-type 2 zinc-finger fold. One can recognise a PH domain in the interval 398-510 (TTLREGWVVH…WETAIRQALM (113 aa)). Position 408 is a phosphotyrosine (tyrosine 408). Phosphotyrosine; by ABL1 is present on tyrosine 439. Serine 519 bears the Phosphoserine mark. Positions 552 to 808 (IFPDEVLGSG…VDKSLSHPWL (257 aa)) constitute a Protein kinase domain. ATP-binding positions include 558–566 (LGSGQFGVV) and lysine 581. The Proton acceptor role is filled by aspartate 675. The residue at position 707 (serine 707) is a Phosphoserine; by PKC. Serine 711 carries the phosphoserine modification. At tyrosine 718 the chain carries Phosphotyrosine; by ABL1. The Important for ABL1-mediated Tyr-718 phosphorylation signature appears at 725-727 (LNQ). At serine 873 the chain carries Phosphoserine; by autocatalysis.

This sequence belongs to the protein kinase superfamily. CAMK Ser/Thr protein kinase family. PKD subfamily. Interacts (via C-terminus) with LCK. Interacts (via N-terminus and zing-finger domain 1 and 2) with PRKCD in response to oxidative stress; the interaction is independent of PRKD2 tyrosine phosphorylation. Mg(2+) serves as cofactor. Phosphorylation of Ser-873 correlates with the activation status of the kinase. Ser-707 is probably phosphorylated by PKC. Phosphorylation at Ser-244 by CSNK1D and CSNK1E promotes nuclear localization and substrate targeting. Phosphorylation at Ser-244, Ser-707 and Ser-711 is required for nuclear localization. Phosphorylated at Tyr-438 by ABL1 in response to oxidative stress. Phosphorylated at Tyr-718 by ABL1 specifically in response to oxidative stress; requires prior phosphorylation at Ser-707 or/and Ser-711.

The protein localises to the cytoplasm. It localises to the cell membrane. It is found in the golgi apparatus. The protein resides in the trans-Golgi network. It catalyses the reaction L-seryl-[protein] + ATP = O-phospho-L-seryl-[protein] + ADP + H(+). The enzyme catalyses L-threonyl-[protein] + ATP = O-phospho-L-threonyl-[protein] + ADP + H(+). Its activity is regulated as follows. Activated by DAG and phorbol esters. Phorbol-ester/DAG-type domains bind DAG, mediating translocation to membranes. Autophosphorylation of Ser-711 and phosphorylation of Ser-707 by PKC relieves auto-inhibition by the PH domain. Catalytic activity is further increased by phosphorylation at Tyr-718 in response to oxidative stress. Serine/threonine-protein kinase that converts transient diacylglycerol (DAG) signals into prolonged physiological effects downstream of PKC, and is involved in the regulation of cell proliferation via MAPK1/3 (ERK1/2) signaling, oxidative stress-induced NF-kappa-B activation, inhibition of HDAC7 transcriptional repression, signaling downstream of T-cell antigen receptor (TCR) and cytokine production, and plays a role in Golgi membrane trafficking, angiogenesis, secretory granule release and cell adhesion. May potentiate mitogenesis induced by the neuropeptide bombesin by mediating an increase in the duration of MAPK1/3 (ERK1/2) signaling, which leads to accumulation of immediate-early gene products including FOS that stimulate cell cycle progression. In response to oxidative stress, is phosphorylated at Tyr-438 and Tyr-718 by ABL1, which leads to the activation of PRKD2 without increasing its catalytic activity, and mediates activation of NF-kappa-B. In response to the activation of the gastrin receptor CCKBR, is phosphorylated at Ser-244 by CSNK1D and CSNK1E, translocates to the nucleus, phosphorylates HDAC7, leading to nuclear export of HDAC7 and inhibition of HDAC7 transcriptional repression of NR4A1/NUR77. Upon TCR stimulation, is activated independently of ZAP70, translocates from the cytoplasm to the nucleus and is required for interleukin-2 (IL2) promoter up-regulation. During adaptive immune responses, is required in peripheral T-lymphocytes for the production of the effector cytokines IL2 and IFNG after TCR engagement and for optimal induction of antibody responses to antigens. In epithelial cells stimulated with lysophosphatidic acid (LPA), is activated through a PKC-dependent pathway and mediates LPA-stimulated interleukin-8 (IL8) secretion via a NF-kappa-B-dependent pathway. During TCR-induced T-cell activation, interacts with and is activated by the tyrosine kinase LCK, which results in the activation of the NFAT transcription factors. In the trans-Golgi network (TGN), regulates the fission of transport vesicles that are on their way to the plasma membrane and in polarized cells is involved in the transport of proteins from the TGN to the basolateral membrane. Plays an important role in endothelial cell proliferation and migration prior to angiogenesis, partly through modulation of the expression of KDR/VEGFR2 and FGFR1, two key growth factor receptors involved in angiogenesis. In secretory pathway, is required for the release of chromogranin-A (CHGA)-containing secretory granules from the TGN. Downstream of PRKCA, plays important roles in angiotensin-2-induced monocyte adhesion to endothelial cells. This Rattus norvegicus (Rat) protein is Serine/threonine-protein kinase D2 (Prkd2).